A 494-amino-acid polypeptide reads, in one-letter code: Cysteine--tRNA ligase (494 aa).

A Zn(2+)-binding site is contributed by Cys-29. A 'HIGH' region motif is present at residues 31-41 (LTVSDDAHLGH). The disordered stretch occupies residues 187 to 220 (KAGGVSPDDANTHRDDELPPLDGERGQTWASPWG). Basic and acidic residues predominate over residues 196–211 (ANTHRDDELPPLDGER). Cys-230, His-255, and Glu-259 together coordinate Zn(2+). Residues 287-291 (KMSSS) carry the 'KMSKS' region motif.

The protein belongs to the class-I aminoacyl-tRNA synthetase family. Requires Zn(2+) as cofactor.

It localises to the cytoplasm. The enzyme catalyses tRNA(Cys) + L-cysteine + ATP = L-cysteinyl-tRNA(Cys) + AMP + diphosphate. This Halobacterium salinarum (strain ATCC 700922 / JCM 11081 / NRC-1) (Halobacterium halobium) protein is Cysteine--tRNA ligase.